The following is a 565-amino-acid chain: Thiol:disulfide interchange protein DsbD (565 aa).

The N-terminal stretch at 1–19 (MAQRIFTLILLLCSTSVFA) is a signal peptide. Intrachain disulfides connect Cys122–Cys128 and Cys182–Cys304. 7 helical membrane-spanning segments follow: residues 163–183 (LPFSALWALLIGIGIAFTPCV), 208–228 (LLTFIYVQGMALTYTALGLVV), 243–263 (YVLIGLAIVFTLLAMSMFGLF), 296–316 (IAGLICSPCTTAPLSAILLYI), 323–343 (WLGGGTLYLYALGMGLPLMLI), 357–377 (WMEQVKTAFGFVILALPVFLL), and 384–404 (VWGLRLWSALGVAFFGWAFIT). Positions 434-565 (WAFGATHTAQ…FSAHLRDRQP (132 aa)) constitute a Thioredoxin domain. A disulfide bond links Cys480 and Cys483.

The protein belongs to the thioredoxin family. DsbD subfamily.

Its subcellular location is the cell inner membrane. It catalyses the reaction [protein]-dithiol + NAD(+) = [protein]-disulfide + NADH + H(+). The enzyme catalyses [protein]-dithiol + NADP(+) = [protein]-disulfide + NADPH + H(+). Functionally, required to facilitate the formation of correct disulfide bonds in some periplasmic proteins and for the assembly of the periplasmic c-type cytochromes. Acts by transferring electrons from cytoplasmic thioredoxin to the periplasm. This transfer involves a cascade of disulfide bond formation and reduction steps. This Shigella flexneri serotype 5b (strain 8401) protein is Thiol:disulfide interchange protein DsbD.